We begin with the raw amino-acid sequence, 165 residues long: Nucleotide-binding protein RoseRS_0530 (165 aa).

The protein belongs to the YajQ family.

Its function is as follows. Nucleotide-binding protein. The protein is Nucleotide-binding protein RoseRS_0530 of Roseiflexus sp. (strain RS-1).